Reading from the N-terminus, the 187-residue chain is Hypoxanthine/guanine phosphoribosyltransferase (187 aa).

It belongs to the purine/pyrimidine phosphoribosyltransferase family. Archaeal HPRT subfamily. Homodimer.

The protein resides in the cytoplasm. The catalysed reaction is IMP + diphosphate = hypoxanthine + 5-phospho-alpha-D-ribose 1-diphosphate. It carries out the reaction GMP + diphosphate = guanine + 5-phospho-alpha-D-ribose 1-diphosphate. Its pathway is purine metabolism; IMP biosynthesis via salvage pathway; IMP from hypoxanthine: step 1/1. Catalyzes a salvage reaction resulting in the formation of IMP that is energically less costly than de novo synthesis. The polypeptide is Hypoxanthine/guanine phosphoribosyltransferase (Methanopyrus kandleri (strain AV19 / DSM 6324 / JCM 9639 / NBRC 100938)).